Consider the following 193-residue polypeptide: NADH-quinone oxidoreductase subunit B (193 aa).

4 residues coordinate [4Fe-4S] cluster: C72, C73, C137, and C167.

The protein belongs to the complex I 20 kDa subunit family. In terms of assembly, NDH-1 is composed of 14 different subunits. Subunits NuoB, C, D, E, F, and G constitute the peripheral sector of the complex. Requires [4Fe-4S] cluster as cofactor.

It is found in the cell inner membrane. The enzyme catalyses a quinone + NADH + 5 H(+)(in) = a quinol + NAD(+) + 4 H(+)(out). In terms of biological role, NDH-1 shuttles electrons from NADH, via FMN and iron-sulfur (Fe-S) centers, to quinones in the respiratory chain. The immediate electron acceptor for the enzyme in this species is believed to be ubiquinone. Couples the redox reaction to proton translocation (for every two electrons transferred, four hydrogen ions are translocated across the cytoplasmic membrane), and thus conserves the redox energy in a proton gradient. This chain is NADH-quinone oxidoreductase subunit B, found in Bartonella bacilliformis (strain ATCC 35685 / KC583 / Herrer 020/F12,63).